A 355-amino-acid chain; its full sequence is Ubiquinone biosynthesis protein COQ4 homolog, mitochondrial (355 aa).

The Zn(2+) site is built by H134, D135, H138, and E150.

It belongs to the COQ4 family. As to quaternary structure, component of a multi-subunit COQ enzyme complex. Zn(2+) serves as cofactor.

Its subcellular location is the mitochondrion inner membrane. It carries out the reaction a 4-hydroxy-3-methoxy-5-(all-trans-polyprenyl)benzoate + H(+) = a 2-methoxy-6-(all-trans-polyprenyl)phenol + CO2. The protein operates within cofactor biosynthesis; ubiquinone biosynthesis. In terms of biological role, lyase that catalyzes the C1-decarboxylation of 4-hydroxy-3-methoxy-5-(all-trans-polyprenyl)benzoic acid into 2-methoxy-6-(all-trans-polyprenyl)phenol during ubiquinone biosynthesis. The protein is Ubiquinone biosynthesis protein COQ4 homolog, mitochondrial of Plasmodium knowlesi (strain H).